The primary structure comprises 394 residues: UPF0284 protein SYNW1869 (394 aa).

The protein belongs to the UPF0284 family.

The chain is UPF0284 protein SYNW1869 from Parasynechococcus marenigrum (strain WH8102).